The primary structure comprises 393 residues: Bifunctional chrysanthemol synthase, chloroplastic (393 aa).

The span at 1–18 (MACSSSLSSKWASWGASS) shows a compositional bias: low complexity. The segment at 1–22 (MACSSSLSSKWASWGASSRPHP) is disordered. A chloroplast-targeting transit peptide spans 1 to 53 (MACSSSLSSKWASWGASSRPHPSVQPFVTRKNVVRYHKPTSELSYSPLTTTLS). Positions 99, 102, and 137 each coordinate dimethylallyl diphosphate. Mg(2+)-binding residues include aspartate 144 and aspartate 148. The dimethylallyl diphosphate site is built by arginine 153, arginine 154, lysine 241, glutamine 280, aspartate 287, lysine 297, and lysine 306.

The protein belongs to the FPP/GGPP synthase family. The cofactor is Mg(2+). In terms of tissue distribution, restricted to glandular trichomes during achene maturation. Expressed in flowers and in both ray and disk florets.

The protein resides in the plastid. Its subcellular location is the chloroplast. The catalysed reaction is 2 dimethylallyl diphosphate = (R,R)-chrysanthemyl diphosphate + diphosphate. It catalyses the reaction (R,R)-chrysanthemyl diphosphate + H2O = (R,R)-chrysanthemol + diphosphate. The enzyme catalyses (R)-lavandulyl diphosphate + H2O = (R)-lavandulol + diphosphate. The protein operates within isoprenoid biosynthesis. Component of the monoterpenoid pyrethrins biosynthesis; pyrethrins are widely used plant-derived pesticide. Catalyzes the condensation of two molecules of dimethylallyl diphosphate to produce chrysanthemyl diphosphate (CPP), a monoterpene with a non-head-to-tail or irregular c1'-2-3 linkage between isoprenoid units. In a second step, hydrolyzes the diphosphate moiety of CPP to form chrysanthemol. With a lower efficiency, can also converts dimethylallyl diphosphate into lavandulyl diphosphate (LPP), and subsequently LPP into lavandulol. This is Bifunctional chrysanthemol synthase, chloroplastic from Tanacetum cinerariifolium (Dalmatian daisy).